The chain runs to 485 residues: Probable RNA-binding protein 46 (485 aa).

3 consecutive RRM domains span residues C61 to D139, C141 to P223, and K236 to P308.

In terms of assembly, interacts with YTHDC2, MEIOC, MOV10, CNOT6L, DDX4, UPF1 and PABPC1.

Its subcellular location is the cytoplasm. In terms of biological role, essential for male and female fertility, playing a crucial role in regulating germ cell development by ensuring the proper progression of meiosis prophase I. Regulates mitotic-to-meiotic transition in spermatogenesis by forming a complex with MEIOC and YTHDC2 which recognizes and down-regulates mitotic transcripts for a successful meiotic entry. Required for normal synaptonemal complex formation during meiosis, binding meiotic cohesin subunit mRNAs containing GCCUAU/GUUCGA motifs in their 3'UTRs regions and positively regulating their translation. Required for spermatogonial differentiation in both developing and adult testis. The sequence is that of Probable RNA-binding protein 46 (RBM46) from Macaca fascicularis (Crab-eating macaque).